The primary structure comprises 265 residues: Deoxyguanosine kinase, mitochondrial (265 aa).

32–40 (GNIAVGKST) contacts ATP. Substrate-binding residues include glutamate 57, tyrosine 88, glutamine 99, and arginine 106. Glutamate 129 (proton acceptor) is an active-site residue. Residues arginine 130 and aspartate 135 each contribute to the substrate site. Position 190 to 194 (190 to 194 (RLQRR)) interacts with ATP. Residue glutamate 199 participates in substrate binding. 242-244 (EDF) contacts ATP.

This sequence belongs to the DCK/DGK family. Homodimer.

The protein localises to the mitochondrion. It carries out the reaction 2'-deoxyguanosine + ATP = dGMP + ADP + H(+). In terms of biological role, phosphorylates deoxyguanosine in the mitochondrial matrix with high efficiency but shows very low activity against other deoxynucleosides. In Xenopus laevis (African clawed frog), this protein is Deoxyguanosine kinase, mitochondrial.